Here is a 317-residue protein sequence, read N- to C-terminus: Flagellar hook-associated protein 3 (317 aa).

The protein belongs to the bacterial flagellin family.

The protein resides in the secreted. Its subcellular location is the bacterial flagellum. In Escherichia coli (strain K12), this protein is Flagellar hook-associated protein 3 (flgL).